We begin with the raw amino-acid sequence, 220 residues long: Guanylate kinase (220 aa).

Residues 16–195 (GLMFVLSSPS…AFESVRSILR (180 aa)) enclose the Guanylate kinase-like domain. Residue 23–30 (SPSGAGKT) participates in ATP binding.

This sequence belongs to the guanylate kinase family.

It localises to the cytoplasm. It catalyses the reaction GMP + ATP = GDP + ADP. Essential for recycling GMP and indirectly, cGMP. This Rhodopseudomonas palustris (strain ATCC BAA-98 / CGA009) protein is Guanylate kinase.